Here is a 226-residue protein sequence, read N- to C-terminus: uncharacterized protein (226 aa).

This sequence belongs to the HisA/HisF family.

This is an uncharacterized protein from Methanocaldococcus jannaschii (strain ATCC 43067 / DSM 2661 / JAL-1 / JCM 10045 / NBRC 100440) (Methanococcus jannaschii).